We begin with the raw amino-acid sequence, 293 residues long: tRNA-cytidine(32) 2-sulfurtransferase (293 aa).

The PP-loop motif motif lies at 62–67; that stretch reads SGGKDS. Residues Cys-137, Cys-140, and Cys-228 each coordinate [4Fe-4S] cluster.

This sequence belongs to the TtcA family. Homodimer. Mg(2+) is required as a cofactor. The cofactor is [4Fe-4S] cluster.

It localises to the cytoplasm. It carries out the reaction cytidine(32) in tRNA + S-sulfanyl-L-cysteinyl-[cysteine desulfurase] + AH2 + ATP = 2-thiocytidine(32) in tRNA + L-cysteinyl-[cysteine desulfurase] + A + AMP + diphosphate + H(+). It participates in tRNA modification. Functionally, catalyzes the ATP-dependent 2-thiolation of cytidine in position 32 of tRNA, to form 2-thiocytidine (s(2)C32). The sulfur atoms are provided by the cysteine/cysteine desulfurase (IscS) system. The sequence is that of tRNA-cytidine(32) 2-sulfurtransferase from Brucella abortus (strain S19).